The primary structure comprises 204 residues: Putative peptidase PfaP (204 aa).

Positions 1–27 are cleaved as a signal peptide; sequence MRLRKTRKIVVSMKDMAASGGYYIASS. S19 serves as the catalytic Nucleophile. K70 acts as the Proton donor/acceptor in catalysis.

It belongs to the peptidase S49 family.

In terms of biological role, possible protease. May be involved in export of periplasmic flagella proteins. The protein is Putative peptidase PfaP (pfaP) of Leptospira borgpetersenii.